Reading from the N-terminus, the 41-residue chain is MKVLSSLKSAKNRHPDCQIVKRRGRLYVICKSNPRFKAVQR.

This sequence belongs to the bacterial ribosomal protein bL36 family.

This is Large ribosomal subunit protein bL36A from Vibrio cholerae serotype O1 (strain ATCC 39541 / Classical Ogawa 395 / O395).